A 233-amino-acid chain; its full sequence is Ion-translocating oxidoreductase complex subunit E (233 aa).

6 consecutive transmembrane segments (helical) span residues 18–38, 39–59, 69–89, 92–112, 128–148, and 182–202; these read ALVQ…ATNA, LGLG…VSAL, IPIY…LINA, FGLY…CIVI, ALDG…LGAL, and PFLL…LLAG.

Belongs to the NqrDE/RnfAE family. The complex is composed of six subunits: RnfA, RnfB, RnfC, RnfD, RnfE and RnfG.

The protein resides in the cell inner membrane. Its function is as follows. Part of a membrane-bound complex that couples electron transfer with translocation of ions across the membrane. This Yersinia pestis bv. Antiqua (strain Angola) protein is Ion-translocating oxidoreductase complex subunit E.